We begin with the raw amino-acid sequence, 67 residues long: Beta-defensin 14 (67 aa).

A signal peptide spans 1–22; that stretch reads MRLHYLLFVFLILFLVPAPGDA. Disulfide bonds link Cys-33-Cys-62, Cys-40-Cys-55, and Cys-45-Cys-63.

This sequence belongs to the beta-defensin family.

The protein resides in the secreted. Has antibacterial activity. In Mus musculus (Mouse), this protein is Beta-defensin 14 (Defb14).